The sequence spans 270 residues: NAD kinase (270 aa).

Asp-63 serves as the catalytic Proton acceptor. NAD(+) contacts are provided by residues 63–64, Arg-68, 131–132, Lys-142, Arg-159, Asp-161, 172–177, Ala-196, and Gln-230; these read DG, NE, and TAYAMS.

The protein belongs to the NAD kinase family. It depends on a divalent metal cation as a cofactor.

It localises to the cytoplasm. The catalysed reaction is NAD(+) + ATP = ADP + NADP(+) + H(+). Involved in the regulation of the intracellular balance of NAD and NADP, and is a key enzyme in the biosynthesis of NADP. Catalyzes specifically the phosphorylation on 2'-hydroxyl of the adenosine moiety of NAD to yield NADP. In Methanoregula boonei (strain DSM 21154 / JCM 14090 / 6A8), this protein is NAD kinase.